The following is a 196-amino-acid chain: Nucleoside triphosphate pyrophosphatase (196 aa).

D70 functions as the Proton acceptor in the catalytic mechanism.

This sequence belongs to the Maf family. It depends on a divalent metal cation as a cofactor.

It localises to the cytoplasm. The catalysed reaction is a ribonucleoside 5'-triphosphate + H2O = a ribonucleoside 5'-phosphate + diphosphate + H(+). It catalyses the reaction a 2'-deoxyribonucleoside 5'-triphosphate + H2O = a 2'-deoxyribonucleoside 5'-phosphate + diphosphate + H(+). Its function is as follows. Nucleoside triphosphate pyrophosphatase. May have a dual role in cell division arrest and in preventing the incorporation of modified nucleotides into cellular nucleic acids. This chain is Nucleoside triphosphate pyrophosphatase, found in Gloeothece citriformis (strain PCC 7424) (Cyanothece sp. (strain PCC 7424)).